The sequence spans 476 residues: Serine--tRNA ligase (476 aa).

Residue 280–282 (TAE) participates in L-serine binding. 311-313 (RAE) contacts ATP. E334 contacts L-serine. 401-404 (EISS) is an ATP binding site. An L-serine-binding site is contributed by S436.

It belongs to the class-II aminoacyl-tRNA synthetase family. Type-1 seryl-tRNA synthetase subfamily. In terms of assembly, homodimer. The tRNA molecule binds across the dimer.

It is found in the cytoplasm. It catalyses the reaction tRNA(Ser) + L-serine + ATP = L-seryl-tRNA(Ser) + AMP + diphosphate + H(+). The catalysed reaction is tRNA(Sec) + L-serine + ATP = L-seryl-tRNA(Sec) + AMP + diphosphate + H(+). The protein operates within aminoacyl-tRNA biosynthesis; selenocysteinyl-tRNA(Sec) biosynthesis; L-seryl-tRNA(Sec) from L-serine and tRNA(Sec): step 1/1. In terms of biological role, catalyzes the attachment of serine to tRNA(Ser). Is also able to aminoacylate tRNA(Sec) with serine, to form the misacylated tRNA L-seryl-tRNA(Sec), which will be further converted into selenocysteinyl-tRNA(Sec). The chain is Serine--tRNA ligase from Rhodopseudomonas palustris (strain HaA2).